Here is a 528-residue protein sequence, read N- to C-terminus: Chaperonin GroEL, chloroplastic (528 aa).

ATP contacts are provided by residues 29–32, 86–90, Gly-415, 481–483, and Asp-497; these read TLGP, DGTTT, and NAA.

The protein belongs to the chaperonin (HSP60) family. Forms a cylinder of 14 subunits composed of two heptameric rings stacked back-to-back. Interacts with the co-chaperonin GroES.

It is found in the plastid. It localises to the chloroplast. The catalysed reaction is ATP + H2O + a folded polypeptide = ADP + phosphate + an unfolded polypeptide.. In terms of biological role, together with its co-chaperonin GroES, plays an essential role in assisting protein folding. The GroEL-GroES system forms a nano-cage that allows encapsulation of the non-native substrate proteins and provides a physical environment optimized to promote and accelerate protein folding. This Trieres chinensis (Marine centric diatom) protein is Chaperonin GroEL, chloroplastic.